We begin with the raw amino-acid sequence, 263 residues long: 22 kDa alpha-zein 16 (263 aa).

An N-terminal signal peptide occupies residues 1 to 21 (MATKILALLALLALLVSATNA).

This sequence belongs to the zein family. Expressed in developing endosperm.

Functionally, zeins are major seed storage proteins. In Zea mays (Maize), this protein is 22 kDa alpha-zein 16.